Consider the following 247-residue polypeptide: Sec-independent protein translocase protein TatC (247 aa).

Helical transmembrane passes span 21-41, 71-91, 109-129, 154-174, and 195-215; these read IILL…KPLI, AFII…WAFV, ITFL…FPFI, FLLQ…VIML, and FCLL…HLMI.

The protein belongs to the TatC family. As to quaternary structure, forms a complex with TatA.

The protein resides in the cell membrane. Part of the twin-arginine translocation (Tat) system that transports large folded proteins containing a characteristic twin-arginine motif in their signal peptide across membranes. This is Sec-independent protein translocase protein TatC from Listeria innocua serovar 6a (strain ATCC BAA-680 / CLIP 11262).